A 197-amino-acid polypeptide reads, in one-letter code: Imidazoleglycerol-phosphate dehydratase (197 aa).

It belongs to the imidazoleglycerol-phosphate dehydratase family.

The protein resides in the cytoplasm. The catalysed reaction is D-erythro-1-(imidazol-4-yl)glycerol 3-phosphate = 3-(imidazol-4-yl)-2-oxopropyl phosphate + H2O. It functions in the pathway amino-acid biosynthesis; L-histidine biosynthesis; L-histidine from 5-phospho-alpha-D-ribose 1-diphosphate: step 6/9. This is Imidazoleglycerol-phosphate dehydratase from Nitrosomonas europaea (strain ATCC 19718 / CIP 103999 / KCTC 2705 / NBRC 14298).